The following is a 358-amino-acid chain: MTRLLIAASGTGGHLFPALAVAEAVEDLWLVSWVGVPDRLETQLVPERFGLVCVNAGGLQGRGLKKLLQLLRLLLASVSVRRAIRRNAIDAVFTTGGYIAAPAILAARWCCIPVVLHESNAIPGRVTRLLGRFCSAVAIGLPAAAKRIPGSQPVLTGTPVRSSFLTPQPLPSWVPHGAGPLLVVMGGSQGAVGLNRMVRAAVPTLLQQGCRVVHLTGDNDPDIEQLQHPQLVERRFSDEIPGLLQHADLAISRAGAGSISELAVCCTPAVLVPFPQAADQHQEANAACAASLGAAVIVHQHEPEQPVLLSTVQRLLAVKLEQPDSASDPLAQMREGMQALAERDAERQLAALLQTLVK.

UDP-N-acetyl-alpha-D-glucosamine contacts are provided by residues 11-13 (TGG), Asn-120, Arg-161, Ser-188, and Gln-282.

Belongs to the glycosyltransferase 28 family. MurG subfamily.

It localises to the cell inner membrane. It carries out the reaction di-trans,octa-cis-undecaprenyl diphospho-N-acetyl-alpha-D-muramoyl-L-alanyl-D-glutamyl-meso-2,6-diaminopimeloyl-D-alanyl-D-alanine + UDP-N-acetyl-alpha-D-glucosamine = di-trans,octa-cis-undecaprenyl diphospho-[N-acetyl-alpha-D-glucosaminyl-(1-&gt;4)]-N-acetyl-alpha-D-muramoyl-L-alanyl-D-glutamyl-meso-2,6-diaminopimeloyl-D-alanyl-D-alanine + UDP + H(+). It participates in cell wall biogenesis; peptidoglycan biosynthesis. Functionally, cell wall formation. Catalyzes the transfer of a GlcNAc subunit on undecaprenyl-pyrophosphoryl-MurNAc-pentapeptide (lipid intermediate I) to form undecaprenyl-pyrophosphoryl-MurNAc-(pentapeptide)GlcNAc (lipid intermediate II). The chain is UDP-N-acetylglucosamine--N-acetylmuramyl-(pentapeptide) pyrophosphoryl-undecaprenol N-acetylglucosamine transferase from Synechococcus sp. (strain CC9605).